The sequence spans 370 residues: Putative F-box protein At3g10430 (370 aa).

Residues 1–47 form the F-box domain; it reads MGSSLPFDLILEILQRTPAESLLRFKSTCKKWYELISNDKRFMYKHL.

The sequence is that of Putative F-box protein At3g10430 from Arabidopsis thaliana (Mouse-ear cress).